Reading from the N-terminus, the 147-residue chain is Myoglobin (147 aa).

An N-acetylalanine modification is found at alanine 2. The Globin domain occupies 2 to 141 (ADFDAVLKCW…IIADLEANYK (140 aa)). Residue histidine 60 participates in nitrite binding. Histidine 60 contacts O2. Histidine 89 serves as a coordination point for heme b.

Belongs to the globin family. As to quaternary structure, monomeric.

The protein localises to the cytoplasm. Its subcellular location is the sarcoplasm. It carries out the reaction Fe(III)-heme b-[protein] + nitric oxide + H2O = Fe(II)-heme b-[protein] + nitrite + 2 H(+). It catalyses the reaction H2O2 + AH2 = A + 2 H2O. Its function is as follows. Monomeric heme protein which primary function is to store oxygen and facilitate its diffusion within muscle tissues. Reversibly binds oxygen through a pentacoordinated heme iron and enables its timely and efficient release as needed during periods of heightened demand. Depending on the oxidative conditions of tissues and cells, and in addition to its ability to bind oxygen, it also has a nitrite reductase activity whereby it regulates the production of bioactive nitric oxide. Under stress conditions, like hypoxia and anoxia, it also protects cells against reactive oxygen species thanks to its pseudoperoxidase activity. The chain is Myoglobin (mb) from Thunnus albacares (Yellowfin tuna).